A 422-amino-acid polypeptide reads, in one-letter code: Choline monooxygenase, chloroplastic (422 aa).

A chloroplast-targeting transit peptide spans 1-47 (MMTTLTATVPEFLPPSLKSTRGYFNSHSEFGVSISKFSRRRFHNPTR). The region spanning 96 to 203 (WQAVGYSDQI…VAVWGPFVLL (108 aa)) is the Rieske domain. [2Fe-2S] cluster-binding residues include Cys138, His140, Cys157, and His160. Fe cation-binding residues include His269 and His274.

It belongs to the choline monooxygenase family. [2Fe-2S] cluster serves as cofactor. It depends on Fe cation as a cofactor. Mg(2+) is required as a cofactor.

It is found in the plastid. The protein resides in the chloroplast stroma. The enzyme catalyses choline + 2 reduced [2Fe-2S]-[ferredoxin] + O2 + 2 H(+) = betaine aldehyde hydrate + 2 oxidized [2Fe-2S]-[ferredoxin] + H2O. Its pathway is amine and polyamine biosynthesis; betaine biosynthesis via choline pathway; betaine aldehyde from choline (monooxygenase route): step 1/1. Functionally, catalyzes the first step of the osmoprotectant glycine betaine synthesis. The sequence is that of Choline monooxygenase, chloroplastic from Arabidopsis thaliana (Mouse-ear cress).